The following is a 704-amino-acid chain: Polyribonucleotide nucleotidyltransferase (704 aa).

2 residues coordinate Mg(2+): Asp487 and Asp493. Residues 554-613 (PRLLTIKIHPDKIREVIGKGGSTIQAITKETGTQIDIQDDGTIIIASVNAIAAQAAKSRI) form the KH domain. In terms of domain architecture, S1 motif spans 623 to 691 (GRIYEGKVAK…KQGRIRLSIK (69 aa)).

This sequence belongs to the polyribonucleotide nucleotidyltransferase family. In terms of assembly, component of the RNA degradosome, which is a multiprotein complex involved in RNA processing and mRNA degradation. Requires Mg(2+) as cofactor.

The protein resides in the cytoplasm. The catalysed reaction is RNA(n+1) + phosphate = RNA(n) + a ribonucleoside 5'-diphosphate. Functionally, involved in mRNA degradation. Catalyzes the phosphorolysis of single-stranded polyribonucleotides processively in the 3'- to 5'-direction. This Xanthomonas euvesicatoria pv. vesicatoria (strain 85-10) (Xanthomonas campestris pv. vesicatoria) protein is Polyribonucleotide nucleotidyltransferase.